A 172-amino-acid chain; its full sequence is Small ribosomal subunit protein bS16 (172 aa).

The tract at residues 125–172 (KKRKAKEEAEAKAAAEKAAEEAAAAEAAKAEEEAAKAEEADSAEESAE) is disordered. 2 stretches are compositionally biased toward basic and acidic residues: residues 129 to 144 (AKEE…KAAE) and 152 to 163 (AKAEEEAAKAEE).

Belongs to the bacterial ribosomal protein bS16 family.

The chain is Small ribosomal subunit protein bS16 from Corynebacterium aurimucosum (strain ATCC 700975 / DSM 44827 / CIP 107346 / CN-1) (Corynebacterium nigricans).